Here is a 224-residue protein sequence, read N- to C-terminus: Protein FAM3D (224 aa).

An N-terminal signal peptide occupies residues 1 to 25 (MRVSGVLRLLALIFAIVTTWMFIRS). Intrachain disulfides connect cysteine 55–cysteine 83 and cysteine 61–cysteine 218. The 159-residue stretch at 64–222 (NYFAFKICSG…LEMEGCMPPK (159 aa)) folds into the GG-type lectin domain. Asparagine 107 is a glycosylation site (N-linked (GlcNAc...) asparagine).

This sequence belongs to the FAM3 family. In terms of tissue distribution, abundantly expressed in placenta and weakly expressed in small intestine.

Its subcellular location is the secreted. The chain is Protein FAM3D (FAM3D) from Homo sapiens (Human).